Here is a 351-residue protein sequence, read N- to C-terminus: Short-chain dehydrogenase sdnK (351 aa).

6 residues coordinate NADP(+): I46, T66, E98, Y224, K228, and T268. Y224 (proton donor) is an active-site residue. The Lowers pKa of active site Tyr role is filled by K228.

The protein belongs to the short-chain dehydrogenases/reductases (SDR) family.

Its pathway is antibiotic biosynthesis. In terms of biological role, short-chain dehydrogenase; part of the gene cluster that mediates the biosynthesis of sordarin and hypoxysordarin, glycoside antibiotics with a unique tetracyclic diterpene aglycone structure. First, the geranylgeranyl diphosphate synthase sdnC constructs GGDP from farnesyl diphosphate and isopentenyl diphosphate. The diterpene cyclase sdnA then catalyzes the cyclization of GGDP to afford cycloaraneosene. Cycloaraneosene is then hydroxylated four times by the putative cytochrome P450 monooxygenases sdnB, sdnE, sdnF and sdnH to give a hydroxylated cycloaraneosene derivative such as cycloaraneosene-8,9,13,19-tetraol. Although the order of the hydroxylations is unclear, at least C8, C9 and C13 of the cycloaraneosene skeleton are hydroxylated before the sordaricin formation. Dehydration of the 13-hydroxy group of the hydroxylated cycloaraneosene derivative might be catalyzed by an unassigned hypothetical protein such as sdnG and sdnP to construct the cyclopentadiene moiety. The FAD-dependent oxidoreductase sdnN is proposed to catalyze the oxidation at C9 of the hydroxylated cycloaraneosene derivative and also catalyze the Baeyer-Villiger oxidation to give the lactone intermediate. The presumed lactone intermediate would be hydrolyzed to give an acrolein moiety and a carboxylate moiety. Then, [4+2]cycloaddition would occur between the acrolein moiety and the cyclopentadiene moiety to give sordaricin. SdnN might also be involved in the [4+2]cycloaddition after the hypothesized oxidation to accommodate the oxidized product and prompt the [4+2]cycloaddition. GDP-6-deoxy-D-altrose may be biosynthesized from GDP-D-mannose by the putative GDP-mannose-4,6-dehydratase sdnI and the short-chain dehydrogenase sdnK. The glycosyltransferase sdnJ catalyzes the attachment of 6-deoxy-D-altrose onto the 19-hydroxy group of sordaricin to give 4'-O-demethylsordarin. The methyltransferase sdnD would complete the biosynthesis of sordarin. Sordarin can be further modified into hypoxysordarin. The unique acyl chain at the 3'-hydroxy group of hypoxysordarin would be constructed by an iterative type I PKS sdnO and the trans-acting polyketide methyltransferase sdnL. SdnL would be responsible for the introduction of an alpha-methyl group of the polyketide chain. Alternatively, the beta-lactamase-like protein sdnR might be responsible for the cleavage and transfer of the polyketide chain from the PKS sdnO to sordarin. Two putative cytochrome P450 monooxygenases, sdnQ and sdnT, might catalyze the epoxidations of the polyketide chain to complete the biosynthesis of hypoxysordarin. Transcriptional regulators sdnM and sdnS are presumably encoded for the transcriptional regulation of the expression of the sdn gene cluster. The chain is Short-chain dehydrogenase sdnK from Sordaria araneosa (Pleurage araneosa).